The chain runs to 292 residues: 33 kDa chaperonin (292 aa).

2 disulfide bridges follow: Cys230/Cys232 and Cys263/Cys266.

It belongs to the HSP33 family. In terms of processing, under oxidizing conditions two disulfide bonds are formed involving the reactive cysteines. Under reducing conditions zinc is bound to the reactive cysteines and the protein is inactive.

The protein localises to the cytoplasm. Functionally, redox regulated molecular chaperone. Protects both thermally unfolding and oxidatively damaged proteins from irreversible aggregation. Plays an important role in the bacterial defense system toward oxidative stress. This chain is 33 kDa chaperonin, found in Cronobacter sakazakii (strain ATCC BAA-894) (Enterobacter sakazakii).